A 108-amino-acid polypeptide reads, in one-letter code: Iron-sulfur cluster assembly protein CyaY (108 aa).

It belongs to the frataxin family.

Functionally, involved in iron-sulfur (Fe-S) cluster assembly. May act as a regulator of Fe-S biogenesis. The polypeptide is Iron-sulfur cluster assembly protein CyaY (Pseudoalteromonas atlantica (strain T6c / ATCC BAA-1087)).